The following is a 396-amino-acid chain: Tyrosine--tRNA ligase (396 aa).

Tyrosine 36 is a binding site for L-tyrosine. The short motif at 41–50 is the 'HIGH' region element; sequence PTANSLHIGN. Residues tyrosine 165 and glutamine 169 each coordinate L-tyrosine. The 'KMSKS' region motif lies at 225-229; it reads KMGKT. Lysine 228 is an ATP binding site. Residues 331–394 form the S4 RNA-binding domain; sequence TNLIDYLVET…KKSFLTIKTV (64 aa).

This sequence belongs to the class-I aminoacyl-tRNA synthetase family. TyrS type 1 subfamily. Homodimer.

The protein resides in the cytoplasm. The catalysed reaction is tRNA(Tyr) + L-tyrosine + ATP = L-tyrosyl-tRNA(Tyr) + AMP + diphosphate + H(+). Its function is as follows. Catalyzes the attachment of tyrosine to tRNA(Tyr) in a two-step reaction: tyrosine is first activated by ATP to form Tyr-AMP and then transferred to the acceptor end of tRNA(Tyr). This is Tyrosine--tRNA ligase from Mycoplasma genitalium (strain ATCC 33530 / DSM 19775 / NCTC 10195 / G37) (Mycoplasmoides genitalium).